Reading from the N-terminus, the 1045-residue chain is Probable beta-glucosidase E (1045 aa).

Residues 1–74 form a disordered region; sequence MAPPDSTHGG…SGSYQLRPVD (74 aa). The Cytoplasmic portion of the chain corresponds to 1–163; that stretch reads MAPPDSTHGG…PVKYARIWWR (163 aa). Basic and acidic residues predominate over residues 11–20; sequence SFRDHLKTND. The chain crosses the membrane as a helical; Signal-anchor for type II membrane protein span at residues 164-184; it reads TLLAVIVTLAVVVWGFLSFAV. The Extracellular segment spans residues 185 to 1045; that stretch reads SHREEPKVWP…SRDLPLMGEY (861 aa). Residues Asn226, Asn234, and Asn402 are each glycosylated (N-linked (GlcNAc...) asparagine). Residue Asp430 is part of the active site. Asn473, Asn512, Asn577, Asn893, Asn902, and Asn988 each carry an N-linked (GlcNAc...) asparagine glycan.

Belongs to the glycosyl hydrolase 3 family.

It localises to the cell membrane. It carries out the reaction Hydrolysis of terminal, non-reducing beta-D-glucosyl residues with release of beta-D-glucose.. It participates in glycan metabolism; cellulose degradation. In terms of biological role, beta-glucosidases are one of a number of cellulolytic enzymes involved in the degradation of cellulosic biomass. Catalyzes the last step releasing glucose from the inhibitory cellobiose. The protein is Probable beta-glucosidase E (bglE) of Neosartorya fischeri (strain ATCC 1020 / DSM 3700 / CBS 544.65 / FGSC A1164 / JCM 1740 / NRRL 181 / WB 181) (Aspergillus fischerianus).